A 355-amino-acid chain; its full sequence is Spore germination protein XB (355 aa).

10 consecutive transmembrane segments (helical) span residues 2–24, 34–56, 69–91, 106–128, 135–157, 180–197, 210–232, 265–287, 299–321, and 326–348; these read VNFF…VIII, DSWI…VFIV, LMRN…YLII, FYLP…FYNI, IALT…MIAN, GMIY…ILFL, LIIV…IVEF, VYQW…PDVL, ISIL…SFYW, and VFLP…FVWV.

This sequence belongs to the amino acid-polyamine-organocation (APC) superfamily. Spore germination protein (SGP) (TC 2.A.3.9) family.

It is found in the cell membrane. May allow B.anthracis to germinate within phagocytic cells and therefore involved in virulence. The chain is Spore germination protein XB (gerXB) from Bacillus anthracis.